The chain runs to 333 residues: Isopenicillin N synthase (333 aa).

Residues R87, Y91, and Y191 each contribute to the isopenicillin N site. N-[(5S)-5-amino-5-carboxypentanoyl]-L-cysteinyl-D-valine-binding residues include R87, Y91, Y191, H216, and D218. The 111-residue stretch at 180-290 (DTLSCRSLMI…RLSLPFFLHA (111 aa)) folds into the Fe2OG dioxygenase domain. Residues H216, D218, and H272 each contribute to the Fe(2+) site. R281 is a binding site for 2-oxoglutarate. S283 serves as a coordination point for isopenicillin N. S283 contributes to the N-[(5S)-5-amino-5-carboxypentanoyl]-L-cysteinyl-D-valine binding site.

This sequence belongs to the iron/ascorbate-dependent oxidoreductase family. Requires Fe cation as cofactor. It depends on L-ascorbate as a cofactor.

The catalysed reaction is N-[(5S)-5-amino-5-carboxypentanoyl]-L-cysteinyl-D-valine + O2 = isopenicillin N + 2 H2O. It participates in antibiotic biosynthesis; penicillin G biosynthesis; penicillin G from L-alpha-aminoadipate and L-cysteine and L-valine: step 2/3. Removes, in the presence of oxygen, 4 hydrogen atoms from delta-L-(alpha-aminoadipyl)-L-cysteinyl-D-valine (ACV) to form the azetidinone and thiazolidine rings of isopenicillin. The chain is Isopenicillin N synthase (pcbC) from Streptomyces microflavus (Streptomyces lipmanii).